The sequence spans 158 residues: SsrA-binding protein (158 aa).

Belongs to the SmpB family.

Its subcellular location is the cytoplasm. Required for rescue of stalled ribosomes mediated by trans-translation. Binds to transfer-messenger RNA (tmRNA), required for stable association of tmRNA with ribosomes. tmRNA and SmpB together mimic tRNA shape, replacing the anticodon stem-loop with SmpB. tmRNA is encoded by the ssrA gene; the 2 termini fold to resemble tRNA(Ala) and it encodes a 'tag peptide', a short internal open reading frame. During trans-translation Ala-aminoacylated tmRNA acts like a tRNA, entering the A-site of stalled ribosomes, displacing the stalled mRNA. The ribosome then switches to translate the ORF on the tmRNA; the nascent peptide is terminated with the 'tag peptide' encoded by the tmRNA and targeted for degradation. The ribosome is freed to recommence translation, which seems to be the essential function of trans-translation. The polypeptide is SsrA-binding protein (Hydrogenovibrio crunogenus (strain DSM 25203 / XCL-2) (Thiomicrospira crunogena)).